Reading from the N-terminus, the 611-residue chain is Chaperone protein DnaK (611 aa).

Threonine 173 is modified (phosphothreonine; by autocatalysis). The segment covering 577-592 (QAAAGQAEGAQGAQDA) has biased composition (low complexity). A disordered region spans residues 577–611 (QAAAGQAEGAQGAQDAGTKKDNVVDAEFEEVKEDK). Residues 600–611 (VDAEFEEVKEDK) show a composition bias toward acidic residues.

It belongs to the heat shock protein 70 family.

Its function is as follows. Acts as a chaperone. The protein is Chaperone protein DnaK of Bacillus cereus (strain G9842).